The primary structure comprises 194 residues: Protein cholesin (194 aa).

Residues 1–83 (MAKQKRKVPE…RKKEERQRLR (83 aa)) form a disordered region. Residues serine 23 and serine 59 each carry the phosphoserine modification. A compositionally biased stretch (basic and acidic residues) spans 61–83 (EEQRVLERKLKKERKKEERQRLR). A phosphoserine mark is found at serine 97 and serine 175.

As to expression, secreted from the instestine, secretion is induced by feeding and cholesterol absorption.

It is found in the secreted. Hormone secreted from the intestine in response to cholesterol, where it acts to inhibit cholesterol synthesis in the liver and VLDL secretion,leading to a reduction in circulating cholesterol levels. Acts through binding to its receptor, GPR146. The protein is Protein cholesin of Homo sapiens (Human).